Here is a 383-residue protein sequence, read N- to C-terminus: NIPA-like protein 2 (383 aa).

Asparagine 23 and asparagine 33 each carry an N-linked (GlcNAc...) asparagine glycan. 7 helical membrane passes run 46 to 66 (IHLFGVLLAILGNLVISISLN), 88 to 108 (VLWWGGVLLMAVGETGNFAAY), 110 to 130 (FAPITLIAPLGCVSVTGSAII), 144 to 164 (LLGTTLAFAGTYLLVNFAPNI), 177 to 197 (LVGWQFLIYVILEILIFCILL), 209 to 229 (VILLTLVAILASLTVISVKAV), and 243 to 263 (LTYPIFYIMFIIMIASCVFQV). A glycan (N-linked (GlcNAc...) asparagine) is linked at asparagine 274. 2 consecutive transmembrane segments (helical) span residues 278 to 298 (VVPVNHIFFTISAIIAGIIFY) and 306 to 326 (FLTVFIYLFGCFLSFLGVFLV). Positions 355-383 (QPDSHSLSYGTLPDGSDSTKSQSGEKKEV) are disordered.

Belongs to the NIPA family.

It localises to the membrane. The protein is NIPA-like protein 2 (NIPAL2) of Homo sapiens (Human).